A 267-amino-acid polypeptide reads, in one-letter code: Translation initiation factor 2 subunit alpha (267 aa).

Positions 12–83 (GELVVATVKE…RKKQVDVSLK (72 aa)) constitute an S1 motif domain.

The protein belongs to the eIF-2-alpha family. In terms of assembly, heterotrimer composed of an alpha, a beta and a gamma chain.

In terms of biological role, eIF-2 functions in the early steps of protein synthesis by forming a ternary complex with GTP and initiator tRNA. This is Translation initiation factor 2 subunit alpha from Hyperthermus butylicus (strain DSM 5456 / JCM 9403 / PLM1-5).